The sequence spans 614 residues: Signal recognition particle receptor subunit alpha homolog (614 aa).

The tract at residues 119–244 (EASAKQVKAP…DRSRDSPDDV (126 aa)) is disordered. Over residues 149 to 160 (QDDKKPVEKRVN) the composition is skewed to basic and acidic residues. A compositionally biased stretch (pro residues) spans 164 to 178 (APPPSKSQPSSPPTG). Residues 232 to 241 (ALLDRSRDSP) are compositionally biased toward basic and acidic residues. Phosphoserine occurs at positions 237 and 240. At Y246 the chain carries Phosphotyrosine. 3 positions are modified to phosphoserine: S268, S278, and S279. Residues 268–285 (SEDEADNEDASSEGEAEE) show a composition bias toward acidic residues. The tract at residues 268 to 290 (SEDEADNEDASSEGEAEEQVQSK) is disordered. The NG domain stretch occupies residues 396–613 (YTIIFCGVNG…NVNAVVNSLM (218 aa)). Residues 402 to 409 (GVNGVGKS), 497 to 501 (DTAGR), and 565 to 568 (TKFD) each bind GTP.

The protein belongs to the GTP-binding SRP family. As to quaternary structure, heterodimer of SrpRalpha and SrpRbeta. In terms of tissue distribution, in 8-9 hours embryos, expression is seen in a segmental pattern along embryonic ventral midline.

It is found in the endoplasmic reticulum membrane. In terms of biological role, component of the SRP (signal recognition particle) receptor. Ensures, in conjunction with the signal recognition particle, the correct targeting of the nascent secretory proteins to the endoplasmic reticulum membrane system. Forms a guanosine 5'-triphosphate (GTP)-dependent complex with the SRP subunit Srp54. SRP receptor compaction and GTPase rearrangement drive SRP-mediated cotranslational protein translocation into the ER. May have a role in axonogenesis. This chain is Signal recognition particle receptor subunit alpha homolog, found in Drosophila melanogaster (Fruit fly).